The chain runs to 177 residues: Large ribosomal subunit protein uL16 (177 aa).

Belongs to the universal ribosomal protein uL16 family. Part of the 50S ribosomal subunit. Weakly binds 5S rRNA. Probably binds the A and P site tRNAs.

In terms of biological role, this is 1 of 5 proteins that mediate the attachment of the 5S rRNA onto the large ribosomal subunit, stabilizing the orientation of adjacent RNA domains. Modeling places the A and P site tRNAs in close proximity to this protein. The sequence is that of Large ribosomal subunit protein uL16 from Haloarcula marismortui (strain ATCC 43049 / DSM 3752 / JCM 8966 / VKM B-1809) (Halobacterium marismortui).